The sequence spans 76 residues: UPF0270 protein PSPA7_1664 (76 aa).

It belongs to the UPF0270 family.

This Pseudomonas paraeruginosa (strain DSM 24068 / PA7) (Pseudomonas aeruginosa (strain PA7)) protein is UPF0270 protein PSPA7_1664.